Reading from the N-terminus, the 548-residue chain is Chaperonin GroEL (548 aa).

ATP-binding positions include 30-33, K51, 87-91, G415, 479-481, and D495; these read TLGP, DGTTT, and NAA.

It belongs to the chaperonin (HSP60) family. In terms of assembly, forms a cylinder of 14 subunits composed of two heptameric rings stacked back-to-back. Interacts with the co-chaperonin GroES.

The protein localises to the cytoplasm. It carries out the reaction ATP + H2O + a folded polypeptide = ADP + phosphate + an unfolded polypeptide.. Together with its co-chaperonin GroES, plays an essential role in assisting protein folding. The GroEL-GroES system forms a nano-cage that allows encapsulation of the non-native substrate proteins and provides a physical environment optimized to promote and accelerate protein folding. This chain is Chaperonin GroEL, found in Proteus mirabilis (strain HI4320).